A 493-amino-acid chain; its full sequence is Ketol-acid reductoisomerase (NADP(+)) (493 aa).

Residues 14–208 form the KARI N-terminal Rossmann domain; it reads LDQLGRCRFM…GGDRAGVLES (195 aa). NADP(+)-binding positions include 45–48, Arg-68, Arg-76, Ser-78, and 108–110; these read CGAQ and DKQ. His-132 is a catalytic residue. Position 158 (Gly-158) interacts with NADP(+). 2 consecutive KARI C-terminal knotted domains span residues 209 to 345 and 346 to 486; these read SFVA…APKA and DGIK…MTDM. 4 residues coordinate Mg(2+): Asp-217, Glu-221, Glu-390, and Glu-394. Ser-415 contributes to the substrate binding site.

Belongs to the ketol-acid reductoisomerase family. Mg(2+) serves as cofactor.

It carries out the reaction (2R)-2,3-dihydroxy-3-methylbutanoate + NADP(+) = (2S)-2-acetolactate + NADPH + H(+). The catalysed reaction is (2R,3R)-2,3-dihydroxy-3-methylpentanoate + NADP(+) = (S)-2-ethyl-2-hydroxy-3-oxobutanoate + NADPH + H(+). It participates in amino-acid biosynthesis; L-isoleucine biosynthesis; L-isoleucine from 2-oxobutanoate: step 2/4. Its pathway is amino-acid biosynthesis; L-valine biosynthesis; L-valine from pyruvate: step 2/4. Its function is as follows. Involved in the biosynthesis of branched-chain amino acids (BCAA). Catalyzes an alkyl-migration followed by a ketol-acid reduction of (S)-2-acetolactate (S2AL) to yield (R)-2,3-dihydroxy-isovalerate. In the isomerase reaction, S2AL is rearranged via a Mg-dependent methyl migration to produce 3-hydroxy-3-methyl-2-ketobutyrate (HMKB). In the reductase reaction, this 2-ketoacid undergoes a metal-dependent reduction by NADPH to yield (R)-2,3-dihydroxy-isovalerate. The chain is Ketol-acid reductoisomerase (NADP(+)) from Mannheimia succiniciproducens (strain KCTC 0769BP / MBEL55E).